The following is a 254-amino-acid chain: Triosephosphate isomerase (254 aa).

Residue 9 to 11 (NWK) participates in substrate binding. Residue H96 is the Electrophile of the active site. The active-site Proton acceptor is E169. Substrate-binding positions include G175, S215, and 236 to 237 (GG).

This sequence belongs to the triosephosphate isomerase family. In terms of assembly, homodimer.

The protein localises to the cytoplasm. It catalyses the reaction D-glyceraldehyde 3-phosphate = dihydroxyacetone phosphate. Its pathway is carbohydrate biosynthesis; gluconeogenesis. It functions in the pathway carbohydrate degradation; glycolysis; D-glyceraldehyde 3-phosphate from glycerone phosphate: step 1/1. Functionally, involved in the gluconeogenesis. Catalyzes stereospecifically the conversion of dihydroxyacetone phosphate (DHAP) to D-glyceraldehyde-3-phosphate (G3P). This Borrelia duttonii (strain Ly) protein is Triosephosphate isomerase.